The sequence spans 270 residues: Urease accessory protein UreD (270 aa).

This sequence belongs to the UreD family. As to quaternary structure, ureD, UreF and UreG form a complex that acts as a GTP-hydrolysis-dependent molecular chaperone, activating the urease apoprotein by helping to assemble the nickel containing metallocenter of UreC. The UreE protein probably delivers the nickel.

Its subcellular location is the cytoplasm. Its function is as follows. Required for maturation of urease via the functional incorporation of the urease nickel metallocenter. The protein is Urease accessory protein UreD of Klebsiella pneumoniae.